A 364-amino-acid chain; its full sequence is Aminomethyltransferase (364 aa).

This sequence belongs to the GcvT family. As to quaternary structure, the glycine cleavage system is composed of four proteins: P, T, L and H.

The enzyme catalyses N(6)-[(R)-S(8)-aminomethyldihydrolipoyl]-L-lysyl-[protein] + (6S)-5,6,7,8-tetrahydrofolate = N(6)-[(R)-dihydrolipoyl]-L-lysyl-[protein] + (6R)-5,10-methylene-5,6,7,8-tetrahydrofolate + NH4(+). The glycine cleavage system catalyzes the degradation of glycine. The polypeptide is Aminomethyltransferase (Shigella sonnei (strain Ss046)).